The chain runs to 162 residues: Small ribosomal subunit protein uS19 (162 aa).

Basic residues predominate over residues Met1–Arg27. A disordered region spans residues Met1–Arg29.

Belongs to the universal ribosomal protein uS19 family.

Functionally, protein S19 forms a complex with S13 that binds strongly to the 16S ribosomal RNA. This chain is Small ribosomal subunit protein uS19, found in Methanococcus aeolicus (strain ATCC BAA-1280 / DSM 17508 / OCM 812 / Nankai-3).